The following is a 109-amino-acid chain: Sperm-specific class P protein 19 (109 aa).

One can recognise an MSP domain in the interval 1–109; the sequence is MSLTADPPAC…TVTIPMSATA (109 aa).

Monomer. As to expression, expressed at higher level in testis.

In Caenorhabditis elegans, this protein is Sperm-specific class P protein 19 (ssp-19).